A 454-amino-acid polypeptide reads, in one-letter code: Aspartokinase 3 (454 aa).

ACT domains are found at residues 312–388 (ISKY…ALIM) and 389–454 (VVGE…VLIS).

Belongs to the aspartokinase family. In terms of assembly, monomer.

The enzyme catalyses L-aspartate + ATP = 4-phospho-L-aspartate + ADP. The protein operates within amino-acid biosynthesis; L-lysine biosynthesis via DAP pathway; (S)-tetrahydrodipicolinate from L-aspartate: step 1/4. Its pathway is amino-acid biosynthesis; L-methionine biosynthesis via de novo pathway; L-homoserine from L-aspartate: step 1/3. It participates in amino-acid biosynthesis; L-threonine biosynthesis; L-threonine from L-aspartate: step 1/5. Functionally, catalyzes the phosphorylation of the beta-carboxyl group of aspartic acid with ATP to yield 4-phospho-L-aspartate, which is involved in the branched biosynthetic pathway leading to the biosynthesis of amino acids threonine, isoleucine and methionine. This Bacillus subtilis (strain 168) protein is Aspartokinase 3 (yclM).